The following is a 211-amino-acid chain: Thiamine-phosphate synthase (211 aa).

Residues 37-41 and Asn-69 each bind 4-amino-2-methyl-5-(diphosphooxymethyl)pyrimidine; that span reads QYRDK. Mg(2+) is bound by residues Asp-70 and Asp-89. Position 108 (Ser-108) interacts with 4-amino-2-methyl-5-(diphosphooxymethyl)pyrimidine. Position 135–137 (135–137) interacts with 2-[(2R,5Z)-2-carboxy-4-methylthiazol-5(2H)-ylidene]ethyl phosphate; that stretch reads SPT. Lys-138 provides a ligand contact to 4-amino-2-methyl-5-(diphosphooxymethyl)pyrimidine. Residues Gly-165 and 185-186 contribute to the 2-[(2R,5Z)-2-carboxy-4-methylthiazol-5(2H)-ylidene]ethyl phosphate site; that span reads LS.

Belongs to the thiamine-phosphate synthase family. The cofactor is Mg(2+).

The enzyme catalyses 2-[(2R,5Z)-2-carboxy-4-methylthiazol-5(2H)-ylidene]ethyl phosphate + 4-amino-2-methyl-5-(diphosphooxymethyl)pyrimidine + 2 H(+) = thiamine phosphate + CO2 + diphosphate. It catalyses the reaction 2-(2-carboxy-4-methylthiazol-5-yl)ethyl phosphate + 4-amino-2-methyl-5-(diphosphooxymethyl)pyrimidine + 2 H(+) = thiamine phosphate + CO2 + diphosphate. It carries out the reaction 4-methyl-5-(2-phosphooxyethyl)-thiazole + 4-amino-2-methyl-5-(diphosphooxymethyl)pyrimidine + H(+) = thiamine phosphate + diphosphate. Its pathway is cofactor biosynthesis; thiamine diphosphate biosynthesis; thiamine phosphate from 4-amino-2-methyl-5-diphosphomethylpyrimidine and 4-methyl-5-(2-phosphoethyl)-thiazole: step 1/1. Functionally, condenses 4-methyl-5-(beta-hydroxyethyl)thiazole monophosphate (THZ-P) and 2-methyl-4-amino-5-hydroxymethyl pyrimidine pyrophosphate (HMP-PP) to form thiamine monophosphate (TMP). In Thiobacillus denitrificans (strain ATCC 25259 / T1), this protein is Thiamine-phosphate synthase.